We begin with the raw amino-acid sequence, 157 residues long: WPP domain-containing protein 3 (157 aa).

Polar residues predominate over residues 1 to 20 (MAETADTINTTVSTPQPQLE). The interval 1 to 41 (MAETADTINTTVSTPQPQLESRSDETSCLQKHRSDATSEVT) is disordered. Positions 32–41 (HRSDATSEVT) are enriched in basic and acidic residues. The WPP; degenerate stretch occupies residues 37–138 (TSEVTKEEKS…IESAEVRFKA (102 aa)).

In terms of tissue distribution, expressed in roots, stems and leaves.

The protein localises to the cytoplasm. It localises to the nucleus. Its function is as follows. Regulates the mitotic activity in roots. The protein is WPP domain-containing protein 3 (WPP3) of Arabidopsis thaliana (Mouse-ear cress).